The primary structure comprises 181 residues: uncharacterized protein (181 aa).

This is an uncharacterized protein from Ictalurid herpesvirus 1 (strain Auburn) (IcHV-1).